The sequence spans 1975 residues: Golgi-specific brefeldin A-resistance guanine nucleotide exchange factor 1 homolog (1975 aa).

Disordered stretches follow at residues 216-243 (NPTE…EPEN) and 299-352 (ISAG…EEKM). Positions 221 to 230 (RQKRKKKRQL) are enriched in basic residues. Positions 624-812 (QIIEQKKRKR…ADMYQAIKTE (189 aa)) constitute an SEC7 domain. Over residues 1264 to 1277 (QSLRVGGDQQQQRM) the composition is skewed to polar residues. Disordered stretches follow at residues 1264–1318 (QSLR…DLES), 1447–1473 (DEKA…VTED), 1699–1751 (IKDT…ATAQ), 1788–1854 (VHSG…QYAY), and 1877–1975 (YANQ…QEKP). The segment covering 1291 to 1309 (GAHEERAYTSEGEERRRGG) has biased composition (basic and acidic residues). A compositionally biased stretch (basic residues) spans 1451–1464 (VKKHHHHHHGHKKK). The span at 1734-1751 (SNSTAATSTSDPSIATAQ) shows a compositional bias: low complexity. The segment covering 1797–1808 (GSPPQTEPPASS) has biased composition (pro residues). Composition is skewed to low complexity over residues 1820-1854 (YEQY…QYAY) and 1877-1894 (YANQ…QQQH). Over residues 1895-1909 (PVNPTSPSVHGQYSV) the composition is skewed to polar residues. The span at 1938–1957 (TPPQNNAPALAPSAPTTTSA) shows a compositional bias: low complexity.

It localises to the golgi apparatus. The protein resides in the cis-Golgi network. The protein localises to the endoplasmic reticulum-Golgi intermediate compartment. In terms of biological role, guanine-nucleotide exchange factor (GEF) for members of the Arf family of small GTPases involved in trafficking in the early secretory pathway; its GEF activity initiates the coating of nascent vesicles via the localized generation of activated ARFs through replacement of GDP with GTP. Also, plays a role in receptor-mediated endocytosis in oocytes and endosomal trafficking. Involved in vesicle retrograde transport from the ERGIC and cis-Golgi compartments to the endoplasmic reticulum (ER). Plays a role in maintaining mitochondrial morphology, network organization and function. May be required for the basolateral cell membrane localization of the serine threonine protein kinase sgk-1 in intestinal cells. The sequence is that of Golgi-specific brefeldin A-resistance guanine nucleotide exchange factor 1 homolog from Caenorhabditis elegans.